A 385-amino-acid chain; its full sequence is 1-deoxy-D-xylulose 5-phosphate reductoisomerase (385 aa).

Residues T10, G11, S12, I13, and N124 each contribute to the NADPH site. 1-deoxy-D-xylulose 5-phosphate is bound at residue K125. E126 provides a ligand contact to NADPH. A Mn(2+)-binding site is contributed by D150. The 1-deoxy-D-xylulose 5-phosphate site is built by S151, E152, S176, and H199. Residue E152 participates in Mn(2+) binding. Residue G205 coordinates NADPH. Positions 212, 217, 218, and 221 each coordinate 1-deoxy-D-xylulose 5-phosphate. A Mn(2+)-binding site is contributed by E221.

Belongs to the DXR family. Mg(2+) is required as a cofactor. It depends on Mn(2+) as a cofactor.

The catalysed reaction is 2-C-methyl-D-erythritol 4-phosphate + NADP(+) = 1-deoxy-D-xylulose 5-phosphate + NADPH + H(+). It participates in isoprenoid biosynthesis; isopentenyl diphosphate biosynthesis via DXP pathway; isopentenyl diphosphate from 1-deoxy-D-xylulose 5-phosphate: step 1/6. Its function is as follows. Catalyzes the NADPH-dependent rearrangement and reduction of 1-deoxy-D-xylulose-5-phosphate (DXP) to 2-C-methyl-D-erythritol 4-phosphate (MEP). This is 1-deoxy-D-xylulose 5-phosphate reductoisomerase from Clostridium botulinum (strain Alaska E43 / Type E3).